We begin with the raw amino-acid sequence, 432 residues long: Glutamate-1-semialdehyde 2,1-aminomutase (432 aa).

Lys-272 bears the N6-(pyridoxal phosphate)lysine mark.

It belongs to the class-III pyridoxal-phosphate-dependent aminotransferase family. HemL subfamily. Homodimer. Pyridoxal 5'-phosphate is required as a cofactor.

It localises to the cytoplasm. The catalysed reaction is (S)-4-amino-5-oxopentanoate = 5-aminolevulinate. Its pathway is porphyrin-containing compound metabolism; protoporphyrin-IX biosynthesis; 5-aminolevulinate from L-glutamyl-tRNA(Glu): step 2/2. It participates in porphyrin-containing compound metabolism; chlorophyll biosynthesis. This is Glutamate-1-semialdehyde 2,1-aminomutase from Trichormus variabilis (strain ATCC 29413 / PCC 7937) (Anabaena variabilis).